A 407-amino-acid chain; its full sequence is Peptidase T (407 aa).

A Zn(2+)-binding site is contributed by His-82. The active site involves Asp-84. A Zn(2+)-binding site is contributed by Asp-143. Residue Glu-177 is the Proton acceptor of the active site. The Zn(2+) site is built by Glu-178, Asp-200, and His-382.

It belongs to the peptidase M20B family. The cofactor is Zn(2+).

Its subcellular location is the cytoplasm. It carries out the reaction Release of the N-terminal residue from a tripeptide.. Its function is as follows. Cleaves the N-terminal amino acid of tripeptides. In Streptococcus pyogenes serotype M28 (strain MGAS6180), this protein is Peptidase T.